A 698-amino-acid chain; its full sequence is MARNTPIERYRNIGICAHVDAGKTTTTERILFYTGLSHKIGEVHDGAATMDWMEQEQERGITITSAATTTFWRGMDAQFQDHRINIIDTPGHVDFTIEVERSLRVLDGAVVVFCGSSGVEPQSETVWRQADKYGVPRIVFVNKMDRAGADFLRVVDQIKNRLGATPVPIQLNIGAEEDFSGVVDLIKMKRINWNEADQGMTFTYEEIPADMQELAEEWRQNLVEAAAEASEELMDKYLEGEELSEAEIKEALRTRTLNNEIVLATCGSAFKNKGVQAVLDAVIEFLPAPVDVPAIKGVDENDNEVERHADDNEPFAALAFKIATDPFVGSLTFMRVYSGVVNTGDAVYNSVKQKRERFGRIVQLHANKREEVKEVRAGDIAAAIGLKDVTTGDTLCDQNAKVILERMEFPEPVIQIAVEPRTQADQEKMGIALGKLAAEDPSFRVETDEESGQTLISGMGELHLDIIVDRMKREFSVECNVGKPQVAYRETIRGTTEVEGKFVRQSGGRGQYGHVWLKIEPSEPDAGFVFVDEIVGGAVPREYISSVAKGIEEQMHNGVLAGYPVLDVKATLFDGSYLDVDSSEMAFKIAGSMAFKKGALEAQPVILEPMMKVEVTTPEDWMGDVVGDLNRRRGMIEGMDDGVAGLKIIRAQVPLSEMFGYATSLRSATQGRASYSMEFAEYGEVSKNIADRIIAERG.

Positions 8-290 (ERYRNIGICA…AVIEFLPAPV (283 aa)) constitute a tr-type G domain. GTP is bound by residues 17–24 (AHVDAGKT), 88–92 (DTPGH), and 142–145 (NKMD).

Belongs to the TRAFAC class translation factor GTPase superfamily. Classic translation factor GTPase family. EF-G/EF-2 subfamily.

The protein resides in the cytoplasm. In terms of biological role, catalyzes the GTP-dependent ribosomal translocation step during translation elongation. During this step, the ribosome changes from the pre-translocational (PRE) to the post-translocational (POST) state as the newly formed A-site-bound peptidyl-tRNA and P-site-bound deacylated tRNA move to the P and E sites, respectively. Catalyzes the coordinated movement of the two tRNA molecules, the mRNA and conformational changes in the ribosome. The polypeptide is Elongation factor G 1 (Aliivibrio fischeri (strain ATCC 700601 / ES114) (Vibrio fischeri)).